The following is a 556-amino-acid chain: Urocanate hydratase (556 aa).

Residues 52 to 53 (GG), Q130, 176 to 178 (GMG), E196, R201, 242 to 243 (NA), 263 to 267 (QTSAH), 273 to 274 (YL), and Y322 each bind NAD(+). C410 is a catalytic residue. G492 contacts NAD(+).

This sequence belongs to the urocanase family. Requires NAD(+) as cofactor.

The protein localises to the cytoplasm. The enzyme catalyses 4-imidazolone-5-propanoate = trans-urocanate + H2O. It participates in amino-acid degradation; L-histidine degradation into L-glutamate; N-formimidoyl-L-glutamate from L-histidine: step 2/3. Catalyzes the conversion of urocanate to 4-imidazolone-5-propionate. This Bradyrhizobium sp. (strain ORS 278) protein is Urocanate hydratase.